A 61-amino-acid polypeptide reads, in one-letter code: ATP synthase F(0) complex subunit 8 (61 aa).

The helical transmembrane segment at 10–32 threads the bilayer; the sequence is FMILSSTWLIYTIILQPKILSHL.

This sequence belongs to the ATPase protein 8 family. Component of the ATP synthase complex composed at least of ATP5F1A/subunit alpha, ATP5F1B/subunit beta, ATP5MC1/subunit c (homooctomer), MT-ATP6/subunit a, MT-ATP8/subunit 8, ATP5ME/subunit e, ATP5MF/subunit f, ATP5MG/subunit g, ATP5MK/subunit k, ATP5MJ/subunit j, ATP5F1C/subunit gamma, ATP5F1D/subunit delta, ATP5F1E/subunit epsilon, ATP5PF/subunit F6, ATP5PB/subunit b, ATP5PD/subunit d, ATP5PO/subunit OSCP. ATP synthase complex consists of a soluble F(1) head domain (subunits alpha(3) and beta(3)) - the catalytic core - and a membrane F(0) domain - the membrane proton channel (subunits c, a, 8, e, f, g, k and j). These two domains are linked by a central stalk (subunits gamma, delta, and epsilon) rotating inside the F1 region and a stationary peripheral stalk (subunits F6, b, d, and OSCP).

The protein localises to the mitochondrion membrane. Its function is as follows. Subunit 8, of the mitochondrial membrane ATP synthase complex (F(1)F(0) ATP synthase or Complex V) that produces ATP from ADP in the presence of a proton gradient across the membrane which is generated by electron transport complexes of the respiratory chain. ATP synthase complex consist of a soluble F(1) head domain - the catalytic core - and a membrane F(1) domain - the membrane proton channel. These two domains are linked by a central stalk rotating inside the F(1) region and a stationary peripheral stalk. During catalysis, ATP synthesis in the catalytic domain of F(1) is coupled via a rotary mechanism of the central stalk subunits to proton translocation. In vivo, can only synthesize ATP although its ATP hydrolase activity can be activated artificially in vitro. Part of the complex F(0) domain. This is ATP synthase F(0) complex subunit 8 from Chelonia mydas (Green sea-turtle).